We begin with the raw amino-acid sequence, 543 residues long: Exodeoxyribonuclease 7 large subunit (543 aa).

The disordered stretch occupies residues 498–543; the sequence is VTGEGDKASPPPQAASATTTPAPGRPNPLPKSPKKSEPPAGQGSLF.

It belongs to the XseA family. As to quaternary structure, heterooligomer composed of large and small subunits.

Its subcellular location is the cytoplasm. It catalyses the reaction Exonucleolytic cleavage in either 5'- to 3'- or 3'- to 5'-direction to yield nucleoside 5'-phosphates.. In terms of biological role, bidirectionally degrades single-stranded DNA into large acid-insoluble oligonucleotides, which are then degraded further into small acid-soluble oligonucleotides. In Allorhizobium ampelinum (strain ATCC BAA-846 / DSM 112012 / S4) (Agrobacterium vitis (strain S4)), this protein is Exodeoxyribonuclease 7 large subunit.